Here is a 213-residue protein sequence, read N- to C-terminus: MNHNEIIKYPLLTEKSYKTMAQNVYVFAVDRRARKIEIKDAIEFIFEVKVEKINLFNVPQKEKKVGRFKGLTNSYKKAYVYLREGKINIFPEEIEKEQKVEKQLIKEKSTSELKLEEKIAAKIAAKEQSEIKDEIVKSVPKKVTSIKKEITSKEVTPIKKTTSVKKETSPKEITSVKKTTTKEKDKTLVVAKKATIDTKVKSTTTKKTTTKKV.

Residues Met-1–Glu-117 are large ribosomal subunit protein uL23. Positions Lys-118–Val-213 are unknown.

Belongs to the universal ribosomal protein uL23 family. Part of the 50S ribosomal subunit. Contacts protein L29, and trigger factor when it is bound to the ribosome.

Its function is as follows. One of the early assembly proteins it binds 23S rRNA. One of the proteins that surrounds the polypeptide exit tunnel on the outside of the ribosome. Forms the main docking site for trigger factor binding to the ribosome. This Mycoplasma mobile (strain ATCC 43663 / 163K / NCTC 11711) (Mesomycoplasma mobile) protein is Large ribosomal subunit protein uL23.